Reading from the N-terminus, the 299-residue chain is Tyrosine recombinase XerC (299 aa).

The Core-binding (CB) domain maps to 1 to 85; sequence MEQHLDAYCM…AVRGFYKYLN (85 aa). The Tyr recombinase domain maps to 106 to 285; the sequence is RLPKTLDTDR…DFQHLATVYD (180 aa). Active-site residues include arginine 146, lysine 170, histidine 237, arginine 240, and histidine 263. Tyrosine 272 (O-(3'-phospho-DNA)-tyrosine intermediate) is an active-site residue.

This sequence belongs to the 'phage' integrase family. XerC subfamily. Forms a cyclic heterotetrameric complex composed of two molecules of XerC and two molecules of XerD.

The protein resides in the cytoplasm. In terms of biological role, site-specific tyrosine recombinase, which acts by catalyzing the cutting and rejoining of the recombining DNA molecules. The XerC-XerD complex is essential to convert dimers of the bacterial chromosome into monomers to permit their segregation at cell division. It also contributes to the segregational stability of plasmids. The chain is Tyrosine recombinase XerC from Pseudomonas syringae pv. tomato (strain ATCC BAA-871 / DC3000).